The primary structure comprises 396 residues: 1-deoxy-D-xylulose 5-phosphate reductoisomerase (396 aa).

The NADPH site is built by Thr-13, Gly-14, Ser-15, Val-16, and Asn-127. Residue Lys-128 participates in 1-deoxy-D-xylulose 5-phosphate binding. Residue Glu-129 participates in NADPH binding. Asp-153 serves as a coordination point for Mn(2+). 4 residues coordinate 1-deoxy-D-xylulose 5-phosphate: Ser-154, Glu-155, Ser-184, and His-207. Glu-155 is a Mn(2+) binding site. Gly-213 serves as a coordination point for NADPH. The 1-deoxy-D-xylulose 5-phosphate site is built by Ser-220, Asn-225, Lys-226, and Glu-229. Glu-229 is a binding site for Mn(2+).

The protein belongs to the DXR family. Mg(2+) serves as cofactor. It depends on Mn(2+) as a cofactor.

It carries out the reaction 2-C-methyl-D-erythritol 4-phosphate + NADP(+) = 1-deoxy-D-xylulose 5-phosphate + NADPH + H(+). It functions in the pathway isoprenoid biosynthesis; isopentenyl diphosphate biosynthesis via DXP pathway; isopentenyl diphosphate from 1-deoxy-D-xylulose 5-phosphate: step 1/6. In terms of biological role, catalyzes the NADPH-dependent rearrangement and reduction of 1-deoxy-D-xylulose-5-phosphate (DXP) to 2-C-methyl-D-erythritol 4-phosphate (MEP). In Pseudomonas fluorescens (strain SBW25), this protein is 1-deoxy-D-xylulose 5-phosphate reductoisomerase.